The sequence spans 515 residues: Probable cytosol aminopeptidase (515 aa).

Residues K279 and D284 each coordinate Mn(2+). The active site involves K291. D302, D361, and E363 together coordinate Mn(2+). The active site involves R365.

It belongs to the peptidase M17 family. Mn(2+) is required as a cofactor.

It localises to the cytoplasm. The enzyme catalyses Release of an N-terminal amino acid, Xaa-|-Yaa-, in which Xaa is preferably Leu, but may be other amino acids including Pro although not Arg or Lys, and Yaa may be Pro. Amino acid amides and methyl esters are also readily hydrolyzed, but rates on arylamides are exceedingly low.. It catalyses the reaction Release of an N-terminal amino acid, preferentially leucine, but not glutamic or aspartic acids.. Functionally, presumably involved in the processing and regular turnover of intracellular proteins. Catalyzes the removal of unsubstituted N-terminal amino acids from various peptides. This chain is Probable cytosol aminopeptidase, found in Mycobacterium bovis (strain ATCC BAA-935 / AF2122/97).